The primary structure comprises 1042 residues: Sarcoplasmic/endoplasmic reticulum calcium ATPase 2 (1042 aa).

The Cytoplasmic portion of the chain corresponds to 1–48 (MENAHTKTVEEVLGHFGVNESTGLSLEQVKKLKERWGSNELPAEEGKT). Ser38 carries the phosphoserine modification. Residues 49–69 (LLELVIEQFEDLLVRILLLAA) form a helical membrane-spanning segment. At 70 to 89 (CISFVLAWFEEGEETITAFV) the chain is on the lumenal side. Residues 90-110 (EPFVILLILVANAIVGVWQER) traverse the membrane as a helical segment. At 111 to 253 (NAENAIEALK…QERTPLQQKL (143 aa)) the chain is on the cytoplasmic side. A helical transmembrane segment spans residues 254–273 (DEFGEQLSKVISLICIAVWI). At 274–295 (INIGHFNDPVHGGSWIRGAIYY) the chain is on the lumenal side. Residues Tyr294 and Tyr295 each carry the 3'-nitrotyrosine modification. A helical transmembrane segment spans residues 296 to 313 (FKIAVALAVAAIPEGLPA). Val304, Ala305, Ile307, and Glu309 together coordinate Ca(2+). Topologically, residues 314 to 756 (VITTCLALGT…EEGRAIYNNM (443 aa)) are cytoplasmic. Asp351 functions as the 4-aspartylphosphate intermediate in the catalytic mechanism. Mg(2+) contacts are provided by Asp351 and Thr353. Residue Thr353 participates in ATP binding. A Phosphothreonine modification is found at Thr441. Residues Glu442, Arg489, and Lys514 each coordinate ATP. Position 531 is a phosphoserine (Ser531). Residue Arg559 coordinates ATP. The tract at residues 575-594 (MNLEDSANFIKYETNLTFVG) is interaction with HAX1. Phosphoserine is present on Ser580. Thr624, Gly625, and Asp626 together coordinate ATP. Phosphoserine is present on Ser663. ATP contacts are provided by Arg677 and Lys683. Asp702 is a binding site for Mg(2+). Asn705 lines the ATP pocket. A helical transmembrane segment spans residues 757–776 (KQFIRYLISSNVGEVVCIFL). Positions 767 and 770 each coordinate Ca(2+). Topologically, residues 777–786 (TAALGFPEAL) are lumenal. A helical membrane pass occupies residues 787 to 807 (IPVQLLWVNLVTDGLPATALG). An interaction with PLN region spans residues 787-807 (IPVQLLWVNLVTDGLPATALG). The segment at 788-1042 (PVQLLWVNLV…DTNFSDMFWS (255 aa)) is interaction with TMEM64 and PDIA3. Positions 795, 798, and 799 each coordinate Ca(2+). The Cytoplasmic portion of the chain corresponds to 808–827 (FNPPDLDIMNKPPRNPKEPL). The helical transmembrane segment at 828–850 (ISGWLFFRYLAIGCYVGAATVGA) threads the bilayer. Topologically, residues 851–896 (AAWWFIAADGGPRVTFYQLSHFLQCKEDNPDFEGVDCAVFESPYPM) are lumenal. A disulfide bridge links Cys875 with Cys887. A helical membrane pass occupies residues 897-916 (TMALSVLVTIEMCNALNSLS). Ca(2+) is bound at residue Glu907. Topologically, residues 917–929 (ENQSLLRMPPWEN) are cytoplasmic. Residues 930–948 (IWLVGSICLSMSLHFLILY) traverse the membrane as a helical segment. Residues 931–942 (WLVGSICLSMSL) form an interaction with PLN region. Topologically, residues 949-963 (VEPLPLIFQITPLNL) are lumenal. Residues 964-984 (TQWLMVLKISLPVILMDETLK) traverse the membrane as a helical segment. Residues 985–1042 (FVARNYLEPGKECVQPATKSCSFSACTDGISWPFVLLIMPLVIWVYSTDTNFSDMFWS) are Cytoplasmic-facing.

It belongs to the cation transport ATPase (P-type) (TC 3.A.3) family. Type IIA subfamily. In terms of assembly, interacts with sarcolipin (SLN); the interaction inhibits ATP2A2 Ca(2+) affinity. Interacts with phospholamban (PLN); the interaction inhibits ATP2A2 Ca(2+) affinity. Interacts with myoregulin (MRLN). Interacts with ARLN and ERLN; the interactions inhibit ATP2A2 Ca(2+) affinity. Interacts with STRIT1/DWORF; the interaction results in activation of ATP2A2. Interacts with the monomeric forms of SLN, PLN, ARLN, ERLN and STRI1/DWORF. Interacts with HAX1. Interacts with S100A8 and S100A9. Interacts with SLC35G1 and STIM1. Interacts with TMEM203. Interacts with TMEM64 and PDIA3. Interacts with TMX1. Interacts with TMX2. Interacts with VMP1; VMP1 competes with PLN and SLN to prevent them from forming an inhibitory complex with ATP2A2. Interacts with ULK1. Interacts with S100A1 in a Ca(2+)-dependent manner. Interacts with TUNAR. Interacts with FLVCR2; this interaction occurs in the absence of heme and promotes ATP2A2 proteasomal degradation; this complex is dissociated upon heme binding. Interacts with FNIP1. Interacts with TRAM2 (via C-terminus). Mg(2+) is required as a cofactor. Nitrated under oxidative stress. Nitration on the two tyrosine residues inhibits catalytic activity. Post-translationally, serotonylated on Gln residues by TGM2 in response to hypoxia, leading to its inactivation. Detected in heart left ventricle (at protein level). Isoform 2 is highly expressed in heart and slow twitch skeletal muscle. Isoform 1 is widely expressed.

The protein resides in the endoplasmic reticulum membrane. The protein localises to the sarcoplasmic reticulum membrane. The enzyme catalyses Ca(2+)(in) + ATP + H2O = Ca(2+)(out) + ADP + phosphate + H(+). With respect to regulation, has different conformational states with differential Ca2+ affinity. The E1 conformational state (active form) shows high Ca(2+) affinity, while the E2 state exhibits low Ca(2+) affinity. Binding of ATP allosterically increases its affinity for subsequent binding of Ca2+. Reversibly inhibited by phospholamban (PLN) at low calcium concentrations. PLN inhibits ATP2A2 Ca(2+) affinity by disrupting its allosteric activation by ATP. Inhibited by sarcolipin (SLN) and myoregulin (MRLN). The inhibition is blocked by VMP1. Enhanced by STRIT1/DWORF; STRIT1 increases activity by displacing sarcolipin (SLN), phospholamban (PLN) and myoregulin (MRLN). Stabilizes SERCA2 in its E2 state. In terms of biological role, this magnesium-dependent enzyme catalyzes the hydrolysis of ATP coupled with the translocation of calcium from the cytosol to the sarcoplasmic reticulum lumen. Involved in autophagy in response to starvation. Upon interaction with VMP1 and activation, controls ER-isolation membrane contacts for autophagosome formation. Also modulates ER contacts with lipid droplets, mitochondria and endosomes. In coordination with FLVCR2 mediates heme-stimulated switching from mitochondrial ATP synthesis to thermogenesis. Functionally, involved in the regulation of the contraction/relaxation cycle. Acts as a regulator of TNFSF11-mediated Ca(2+) signaling pathways via its interaction with TMEM64 which is critical for the TNFSF11-induced CREB1 activation and mitochondrial ROS generation necessary for proper osteoclast generation. Association between TMEM64 and SERCA2 in the ER leads to cytosolic Ca(2+) spiking for activation of NFATC1 and production of mitochondrial ROS, thereby triggering Ca(2+) signaling cascades that promote osteoclast differentiation and activation. This Sus scrofa (Pig) protein is Sarcoplasmic/endoplasmic reticulum calcium ATPase 2 (ATP2A2).